The chain runs to 315 residues: Acetyl-coenzyme A carboxylase carboxyl transferase subunit alpha (315 aa).

Residues Glu32–Glu289 enclose the CoA carboxyltransferase C-terminal domain.

It belongs to the AccA family. Acetyl-CoA carboxylase is a heterohexamer composed of biotin carboxyl carrier protein (AccB), biotin carboxylase (AccC) and two subunits each of ACCase subunit alpha (AccA) and ACCase subunit beta (AccD).

It is found in the cytoplasm. It carries out the reaction N(6)-carboxybiotinyl-L-lysyl-[protein] + acetyl-CoA = N(6)-biotinyl-L-lysyl-[protein] + malonyl-CoA. It functions in the pathway lipid metabolism; malonyl-CoA biosynthesis; malonyl-CoA from acetyl-CoA: step 1/1. Functionally, component of the acetyl coenzyme A carboxylase (ACC) complex. First, biotin carboxylase catalyzes the carboxylation of biotin on its carrier protein (BCCP) and then the CO(2) group is transferred by the carboxyltransferase to acetyl-CoA to form malonyl-CoA. The polypeptide is Acetyl-coenzyme A carboxylase carboxyl transferase subunit alpha (Staphylococcus carnosus (strain TM300)).